The following is a 243-amino-acid chain: Sec-independent protein translocase protein TatC (243 aa).

Helical transmembrane passes span 18-38 (VIII…NYVD), 70-90 (IAII…IWSF), 106-126 (MIPV…FTVF), 132-152 (FLLQ…KYIS), 153-173 (FALN…VVYI), 191-211 (YALL…DVIS), and 213-233 (LLMA…AKFI).

It belongs to the TatC family. Forms a complex with TatA.

It is found in the cell membrane. Functionally, part of the twin-arginine translocation (Tat) system that transports large folded proteins containing a characteristic twin-arginine motif in their signal peptide across membranes. This chain is Sec-independent protein translocase protein TatC, found in Carboxydothermus hydrogenoformans (strain ATCC BAA-161 / DSM 6008 / Z-2901).